The following is a 309-amino-acid chain: Porphobilinogen deaminase (309 aa).

C242 is modified (S-(dipyrrolylmethanemethyl)cysteine).

The protein belongs to the HMBS family. Monomer. It depends on dipyrromethane as a cofactor.

The enzyme catalyses 4 porphobilinogen + H2O = hydroxymethylbilane + 4 NH4(+). Its pathway is porphyrin-containing compound metabolism; protoporphyrin-IX biosynthesis; coproporphyrinogen-III from 5-aminolevulinate: step 2/4. Functionally, tetrapolymerization of the monopyrrole PBG into the hydroxymethylbilane pre-uroporphyrinogen in several discrete steps. The polypeptide is Porphobilinogen deaminase (Legionella pneumophila (strain Lens)).